The primary structure comprises 170 residues: MENIVLIGMPLSGKSTLGRELSKILKYDLIDTDTLIEEMEDKSIKEIFKIYGEDYFREKELEIINKFKKESNKVISTGGGLPIYNKNIYELKKIGFTVYLKVPLEELIKRMVKKEYDTRPLLKNNDTKFLEEMYKNRIEIYEKAHTIICNTNYEESLITIVRAYKKWKGI.

11–16 (LSGKST) contributes to the ATP binding site. S15 contributes to the Mg(2+) binding site. 3 residues coordinate substrate: D33, R57, and G79. R119 is a binding site for ATP. Residue R137 participates in substrate binding.

Belongs to the shikimate kinase family. In terms of assembly, monomer. Requires Mg(2+) as cofactor.

Its subcellular location is the cytoplasm. The catalysed reaction is shikimate + ATP = 3-phosphoshikimate + ADP + H(+). Its pathway is metabolic intermediate biosynthesis; chorismate biosynthesis; chorismate from D-erythrose 4-phosphate and phosphoenolpyruvate: step 5/7. Catalyzes the specific phosphorylation of the 3-hydroxyl group of shikimic acid using ATP as a cosubstrate. The protein is Shikimate kinase of Clostridium botulinum (strain Langeland / NCTC 10281 / Type F).